The primary structure comprises 102 residues: ATP-dependent Clp protease adapter protein ClpS (102 aa).

The protein belongs to the ClpS family. As to quaternary structure, binds to the N-terminal domain of the chaperone ClpA.

In terms of biological role, involved in the modulation of the specificity of the ClpAP-mediated ATP-dependent protein degradation. The polypeptide is ATP-dependent Clp protease adapter protein ClpS (Shewanella denitrificans (strain OS217 / ATCC BAA-1090 / DSM 15013)).